Consider the following 461-residue polypeptide: Ribosomal protein uS12 methylthiotransferase RimO (461 aa).

An MTTase N-terminal domain is found at 13–128; the sequence is PKVGFVSLGC…VMQHVHTHLP (116 aa). Positions 22, 58, 87, 159, 163, and 166 each coordinate [4Fe-4S] cluster. In terms of domain architecture, Radical SAM core spans 145–390; sequence LTPRHYAYLK…MEVAEEVSAK (246 aa). In terms of domain architecture, TRAM spans 393–461; that stretch reads AKKVGKTLKV…ADGHDLWGEV (69 aa).

Belongs to the methylthiotransferase family. RimO subfamily. The cofactor is [4Fe-4S] cluster.

The protein resides in the cytoplasm. The enzyme catalyses L-aspartate(89)-[ribosomal protein uS12]-hydrogen + (sulfur carrier)-SH + AH2 + 2 S-adenosyl-L-methionine = 3-methylsulfanyl-L-aspartate(89)-[ribosomal protein uS12]-hydrogen + (sulfur carrier)-H + 5'-deoxyadenosine + L-methionine + A + S-adenosyl-L-homocysteine + 2 H(+). Its function is as follows. Catalyzes the methylthiolation of an aspartic acid residue of ribosomal protein uS12. The polypeptide is Ribosomal protein uS12 methylthiotransferase RimO (Paraburkholderia phytofirmans (strain DSM 17436 / LMG 22146 / PsJN) (Burkholderia phytofirmans)).